The primary structure comprises 58 residues: Small ribosomal subunit protein bS21 (58 aa).

The disordered stretch occupies residues 35-58; that stretch reads REHYEKPSVKRKKKSEAARKRKFK. Over residues 43–58 the composition is skewed to basic residues; that stretch reads VKRKKKSEAARKRKFK.

It belongs to the bacterial ribosomal protein bS21 family.

The protein is Small ribosomal subunit protein bS21 of Ruminiclostridium cellulolyticum (strain ATCC 35319 / DSM 5812 / JCM 6584 / H10) (Clostridium cellulolyticum).